The primary structure comprises 175 residues: Pancreatic beta cell growth factor (175 aa).

The signal sequence occupies residues 1 to 26; that stretch reads MMLPMTLCRMSWMLLSCLMFLSWVEG. Positions 38–175 constitute a C-type lectin domain; sequence ITCPQGSVAY…ELPYICKFKV (138 aa). Intrachain disulfides connect Cys-40-Cys-51, Cys-68-Cys-171, and Cys-146-Cys-163.

As to expression, expressed only in CW animals pancreas and to a lesser extent in duodenum. In pancreas it is found in acinar cells, but not in islets.

It localises to the secreted. Constituent of ilotropin, which is a partially purified preparation of cellophane wrapping (CW) pancreata. Capable of initiating duct cell proliferation, a prerequisite for islet neogenesis. In Mesocricetus auratus (Golden hamster), this protein is Pancreatic beta cell growth factor (INGAP).